The sequence spans 70 residues: MPRKIEEIKDFLLTARRKDAKSVKIKKNKDNVKFKVRCSRYLYTLVITDKEKAEKLKQSLPPGLAVKELK.

Residue K4 forms a Glycyl lysine isopeptide (Lys-Gly) (interchain with G-Cter in SUMO2) linkage. Residue K9 is modified to N6-acetyllysine; alternate. Residue K9 forms a Glycyl lysine isopeptide (Lys-Gly) (interchain with G-Cter in SUMO2); alternate linkage. Residue K67 is modified to N6-acetyllysine.

The protein belongs to the eukaryotic ribosomal protein eL38 family. In terms of assembly, component of the large ribosomal subunit.

The protein resides in the cytoplasm. In terms of biological role, component of the large ribosomal subunit. The ribosome is a large ribonucleoprotein complex responsible for the synthesis of proteins in the cell. This Homo sapiens (Human) protein is Large ribosomal subunit protein eL38 (RPL38).